A 589-amino-acid chain; its full sequence is Isocitrate dehydrogenase kinase/phosphatase (589 aa).

Residues 317–323 (AAGIKGM) and K338 each bind ATP. D373 is a catalytic residue.

The protein belongs to the AceK family.

The protein localises to the cytoplasm. It catalyses the reaction L-seryl-[isocitrate dehydrogenase] + ATP = O-phospho-L-seryl-[isocitrate dehydrogenase] + ADP + H(+). In terms of biological role, bifunctional enzyme which can phosphorylate or dephosphorylate isocitrate dehydrogenase (IDH) on a specific serine residue. This is a regulatory mechanism which enables bacteria to bypass the Krebs cycle via the glyoxylate shunt in response to the source of carbon. When bacteria are grown on glucose, IDH is fully active and unphosphorylated, but when grown on acetate or ethanol, the activity of IDH declines drastically concomitant with its phosphorylation. This chain is Isocitrate dehydrogenase kinase/phosphatase, found in Colwellia psychrerythraea (strain 34H / ATCC BAA-681) (Vibrio psychroerythus).